A 208-amino-acid polypeptide reads, in one-letter code: Protein late bloomer (208 aa).

Transmembrane regions (helical) follow at residues 10–30 (IASI…IGWI), 41–61 (FVIA…LGIF), 67–87 (SVVL…LQIV), and 174–194 (FIIV…LAVF).

The protein belongs to the tetraspanin (TM4SF) family. As to expression, transiently expressed on motor axons, growth cones and terminal arbors.

The protein resides in the membrane. The protein localises to the synapse. Functionally, facilitates synapse formation. The protein is Protein late bloomer (lbm) of Drosophila melanogaster (Fruit fly).